Consider the following 261-residue polypeptide: Sugar fermentation stimulation protein homolog (261 aa).

The segment at Met-1–Ala-23 is disordered.

Belongs to the SfsA family.

The polypeptide is Sugar fermentation stimulation protein homolog (Syntrophobacter fumaroxidans (strain DSM 10017 / MPOB)).